The chain runs to 394 residues: Venom metalloproteinase antarease TserMP_A (394 aa).

An N-terminal signal peptide occupies residues 1–16; that stretch reads MISYLASIFLLATVSA. Positions 17–157 are excised as a propeptide; sequence VPSGRVEVVF…NAENVSRMAR (141 aa). Residues 162–391 enclose the Peptidase M12B domain; it reads IVVEYYIVTD…PTASCIFQQC (230 aa). An intrachain disulfide couples cysteine 295 to cysteine 386. Histidine 319 serves as a coordination point for Zn(2+). The active site involves glutamate 320. 2 residues coordinate Zn(2+): histidine 323 and histidine 329.

Zn(2+) serves as cofactor. Post-translationally, contains 4 disulfide bonds. As to expression, expressed by the venom gland.

The protein localises to the secreted. Inhibited by EDTA. Functionally, acts as a metalloprotease. Penetrates intact tissue and specifically cleaves the vesicle-associated membrane protein 2 (VAMP2) (part of the SNARE complex) involved in pancreatic secretion, thus disrupting the normal vesicular traffic. This is Venom metalloproteinase antarease TserMP_A from Tityus serrulatus (Brazilian scorpion).